The primary structure comprises 303 residues: Signal recognition particle receptor FtsY (303 aa).

GTP-binding positions include 108 to 115 (GVNGVGKT), 190 to 194 (DTAGR), and 254 to 257 (TKLD).

The protein belongs to the GTP-binding SRP family. FtsY subfamily. As to quaternary structure, part of the signal recognition particle protein translocation system, which is composed of SRP and FtsY. SRP is a ribonucleoprotein composed of Ffh and a 4.5S RNA molecule.

Its subcellular location is the cell inner membrane. The protein resides in the cytoplasm. It catalyses the reaction GTP + H2O = GDP + phosphate + H(+). In terms of biological role, involved in targeting and insertion of nascent membrane proteins into the cytoplasmic membrane. Acts as a receptor for the complex formed by the signal recognition particle (SRP) and the ribosome-nascent chain (RNC). Interaction with SRP-RNC leads to the transfer of the RNC complex to the Sec translocase for insertion into the membrane, the hydrolysis of GTP by both Ffh and FtsY, and the dissociation of the SRP-FtsY complex into the individual components. The protein is Signal recognition particle receptor FtsY of Rickettsia typhi (strain ATCC VR-144 / Wilmington).